The following is a 257-amino-acid chain: Large ribosomal subunit protein eL8z (257 aa).

It belongs to the eukaryotic ribosomal protein eL8 family.

The sequence is that of Large ribosomal subunit protein eL8z (RPL7AA) from Arabidopsis thaliana (Mouse-ear cress).